An 84-amino-acid chain; its full sequence is Defensin-like protein 49 (84 aa).

Residues 1-29 form the signal peptide; that stretch reads MGITKSLMIFFHIVLLAVSLSNNIILTSG. Cystine bridges form between cysteine 40/cysteine 82, cysteine 44/cysteine 68, cysteine 54/cysteine 80, and cysteine 58/cysteine 81.

It belongs to the DEFL family.

Its subcellular location is the secreted. In Arabidopsis thaliana (Mouse-ear cress), this protein is Defensin-like protein 49.